Reading from the N-terminus, the 336-residue chain is 3-isopropylmalate dehydrogenase (336 aa).

The substrate site is built by Arg-87, Arg-97, Arg-121, and Asp-211. Residues Asp-211, Asp-235, and Asp-239 each contribute to the Mg(2+) site. Gly-271–Asp-283 contacts NAD(+).

The protein belongs to the isocitrate and isopropylmalate dehydrogenases family. LeuB type 2 subfamily. In terms of assembly, homodimer. Requires Mg(2+) as cofactor. The cofactor is Mn(2+).

The protein resides in the cytoplasm. The enzyme catalyses (2R,3S)-3-isopropylmalate + NAD(+) = 4-methyl-2-oxopentanoate + CO2 + NADH. Its pathway is amino-acid biosynthesis; L-leucine biosynthesis; L-leucine from 3-methyl-2-oxobutanoate: step 3/4. Its function is as follows. Catalyzes the oxidation of 3-carboxy-2-hydroxy-4-methylpentanoate (3-isopropylmalate) to 3-carboxy-4-methyl-2-oxopentanoate. The product decarboxylates to 4-methyl-2 oxopentanoate. This chain is 3-isopropylmalate dehydrogenase, found in Mycobacterium leprae (strain Br4923).